The following is a 659-amino-acid chain: Pesticidal crystal protein Cry3Ba (659 aa).

Positions 1–41 are disordered; sequence MIRMGGRKMNPNNRSEYDTIKVTPNSELPTNHNQYPLADNP. Positions 22-41 are enriched in polar residues; it reads VTPNSELPTNHNQYPLADNP.

Belongs to the delta endotoxin family.

In terms of biological role, promotes colloidosmotic lysis by binding to the midgut epithelial cells of Coleoptera. In Bacillus thuringiensis subsp. tolworthi, this protein is Pesticidal crystal protein Cry3Ba (cry3Ba).